The primary structure comprises 447 residues: Argininosuccinate lyase (447 aa).

This sequence belongs to the lyase 1 family. Argininosuccinate lyase subfamily.

Its subcellular location is the cytoplasm. The catalysed reaction is 2-(N(omega)-L-arginino)succinate = fumarate + L-arginine. Its pathway is amino-acid biosynthesis; L-arginine biosynthesis; L-arginine from L-ornithine and carbamoyl phosphate: step 3/3. This is Argininosuccinate lyase from Sulfolobus acidocaldarius (strain ATCC 33909 / DSM 639 / JCM 8929 / NBRC 15157 / NCIMB 11770).